We begin with the raw amino-acid sequence, 304 residues long: Glyceraldehyde-3-phosphate dehydrogenase 2 (304 aa).

Residues 1-2 (RI), Asp22, and Arg67 contribute to the NAD(+) site. Residues 138-140 (SCT), Thr169, 198-199 (TG), and Arg221 contribute to the D-glyceraldehyde 3-phosphate site. Cys139 (nucleophile) is an active-site residue. Residue Asn303 participates in NAD(+) binding.

The protein belongs to the glyceraldehyde-3-phosphate dehydrogenase family. As to quaternary structure, homotetramer.

The protein resides in the cytoplasm. It carries out the reaction D-glyceraldehyde 3-phosphate + phosphate + NAD(+) = (2R)-3-phospho-glyceroyl phosphate + NADH + H(+). The protein operates within carbohydrate degradation; glycolysis; pyruvate from D-glyceraldehyde 3-phosphate: step 1/5. This Drosophila subobscura (Fruit fly) protein is Glyceraldehyde-3-phosphate dehydrogenase 2 (Gapdh2).